The primary structure comprises 297 residues: ER membrane protein complex subunit 2-A (297 aa).

3 TPR repeats span residues 87 to 120 (HRVK…DPTN), 155 to 188 (QEAW…NPHN), and 192 to 225 (YQQF…NNHN).

The protein belongs to the EMC2 family. Component of the ER membrane protein complex (EMC).

It is found in the endoplasmic reticulum membrane. In terms of biological role, part of the endoplasmic reticulum membrane protein complex (EMC) that enables the energy-independent insertion into endoplasmic reticulum membranes of newly synthesized membrane proteins. Preferentially accommodates proteins with transmembrane domains that are weakly hydrophobic or contain destabilizing features such as charged and aromatic residues. Involved in the cotranslational insertion of multi-pass membrane proteins in which stop-transfer membrane-anchor sequences become ER membrane spanning helices. It is also required for the post-translational insertion of tail-anchored/TA proteins in endoplasmic reticulum membranes. By mediating the proper cotranslational insertion of N-terminal transmembrane domains in an N-exo topology, with translocated N-terminus in the lumen of the ER, controls the topology of multi-pass membrane proteins. By regulating the insertion of various proteins in membranes, it is indirectly involved in many cellular processes. The chain is ER membrane protein complex subunit 2-A (emc2-a) from Xenopus laevis (African clawed frog).